We begin with the raw amino-acid sequence, 127 residues long: Probable glycine cleavage system H protein (127 aa).

The 83-residue stretch at 24 to 106 folds into the Lipoyl-binding domain; it reads TAEVGITAFA…FGDGWMLTVE (83 aa). Lysine 65 is modified (N6-lipoyllysine).

It belongs to the GcvH family. The glycine cleavage system is composed of four proteins: P, T, L and H. (R)-lipoate is required as a cofactor.

Functionally, the glycine cleavage system catalyzes the degradation of glycine. The H protein shuttles the methylamine group of glycine from the P protein to the T protein. The protein is Probable glycine cleavage system H protein of Haloarcula marismortui (strain ATCC 43049 / DSM 3752 / JCM 8966 / VKM B-1809) (Halobacterium marismortui).